A 539-amino-acid polypeptide reads, in one-letter code: Phenylacetyl-CoA ligase epaB (539 aa).

Residue 188–199 (RLFSSGTTGLPK) participates in AMP binding. Residues 449–525 (EVEGVLRNHP…DAIPRNASGK (77 aa)) form an AMP-binding region.

Belongs to the ATP-dependent AMP-binding enzyme family.

It functions in the pathway secondary metabolite biosynthesis. Functionally, phenylacetyl-CoA ligase; part of the gene cluster that mediates the biosynthesis of nigerpyrone and its derivatives carbonarone A and pestalamide A. The biosynthesis pathway begins with the polyketide assembly by epaA to form phenylacetyl triketide precursor from successive condensation of two malonyl-CoA, presumably with one phenylacetyl-CoA starter unit produced by the phenylacetyl-CoA ligase epaB. For the nigerpyrone biosynthesis, the reactive polyketide chain is released as an aldehyde through the R-domain. A nonenzymatic cyclization and dehydration may create nigerpyrone. For the biosynthesis of carbonarone A and pestalamide A, an extra methyl group is added through the C-methyltransferase domain. Several further steps involving the dehydrogenase orf1, the cytochrome P450 monooxygenase orf2 and the FAD-dependent monooxygenase orf3 are required to form a carbonarone A precursor which is converted to carbonarone A via cyclization. The O-acetyltransferase epaC could catalyze the transfer of 2-methylsuccinyl-CoA, a common intermediate in the ethylmalonyl-CoA pathway, to generate the final product pestalamide A. The polypeptide is Phenylacetyl-CoA ligase epaB (Aspergillus niger (strain ATCC MYA-4892 / CBS 513.88 / FGSC A1513)).